The sequence spans 463 residues: Probable glycosyltransferase 3 (463 aa).

The disordered stretch occupies residues 1–20 (MAVTGGGRPAARQQAARGKQ). Topologically, residues 1-24 (MAVTGGGRPAARQQAARGKQMQRT) are cytoplasmic. A compositionally biased stretch (low complexity) spans 9–20 (PAARQQAARGKQ). The helical; Signal-anchor for type II membrane protein transmembrane segment at 25-47 (FNNVKITLICGFITLLVLRGTVG) threads the bilayer. Topologically, residues 48 to 463 (INLLTYGVGG…ALKMDAKIES (416 aa)) are lumenal. The interval 82–125 (EIRSDTDDDDDDEEEEPLGVDASTTTTTNSTTTTATAARRRSSN) is disordered. Over residues 87–99 (TDDDDDDEEEEPL) the composition is skewed to acidic residues. Residues 103-118 (ASTTTTTNSTTTTATA) are compositionally biased toward low complexity. Residues asparagine 110, asparagine 125, and asparagine 442 are each glycosylated (N-linked (GlcNAc...) asparagine).

It belongs to the glycosyltransferase 34 family.

It is found in the golgi apparatus membrane. Its function is as follows. Probable glycosyltransferase that may be involved in the biosynthesis of xyloglucan. The protein is Probable glycosyltransferase 3 of Oryza sativa subsp. indica (Rice).